The following is a 443-amino-acid chain: Probable D-serine dehydratase (443 aa).

Position 116 is an N6-(pyridoxal phosphate)lysine (Lys116).

The protein belongs to the serine/threonine dehydratase family. DsdA subfamily. Requires pyridoxal 5'-phosphate as cofactor.

The enzyme catalyses D-serine = pyruvate + NH4(+). This Bacillus cereus (strain B4264) protein is Probable D-serine dehydratase.